The following is a 468-amino-acid chain: Cysteine--tRNA ligase (468 aa).

C28 is a Zn(2+) binding site. A 'HIGH' region motif is present at residues 30–40 (PTVYNYIHIGN). Zn(2+) contacts are provided by C212, H237, and E241. The 'KMSKS' region motif lies at 271–275 (KMSKS). Residue K274 coordinates ATP.

It belongs to the class-I aminoacyl-tRNA synthetase family. Monomer. Requires Zn(2+) as cofactor.

The protein resides in the cytoplasm. The catalysed reaction is tRNA(Cys) + L-cysteine + ATP = L-cysteinyl-tRNA(Cys) + AMP + diphosphate. The polypeptide is Cysteine--tRNA ligase (Latilactobacillus sakei subsp. sakei (strain 23K) (Lactobacillus sakei subsp. sakei)).